We begin with the raw amino-acid sequence, 121 residues long: Small ribosomal subunit protein uS12c (121 aa).

It belongs to the universal ribosomal protein uS12 family. As to quaternary structure, part of the 30S ribosomal subunit.

The protein localises to the plastid. It is found in the apicoplast. Functionally, with S4 and S5 plays an important role in translational accuracy. Located at the interface of the 30S and 50S subunits. The protein is Small ribosomal subunit protein uS12c (rps12) of Toxoplasma gondii.